The primary structure comprises 156 residues: ATP synthase subunit b (156 aa).

The chain crosses the membrane as a helical span at residues 7-27 (LFAQIIVFFGLVWFTMKFVWP).

The protein belongs to the ATPase B chain family. F-type ATPases have 2 components, F(1) - the catalytic core - and F(0) - the membrane proton channel. F(1) has five subunits: alpha(3), beta(3), gamma(1), delta(1), epsilon(1). F(0) has three main subunits: a(1), b(2) and c(10-14). The alpha and beta chains form an alternating ring which encloses part of the gamma chain. F(1) is attached to F(0) by a central stalk formed by the gamma and epsilon chains, while a peripheral stalk is formed by the delta and b chains.

It localises to the cell inner membrane. Functionally, f(1)F(0) ATP synthase produces ATP from ADP in the presence of a proton or sodium gradient. F-type ATPases consist of two structural domains, F(1) containing the extramembraneous catalytic core and F(0) containing the membrane proton channel, linked together by a central stalk and a peripheral stalk. During catalysis, ATP synthesis in the catalytic domain of F(1) is coupled via a rotary mechanism of the central stalk subunits to proton translocation. In terms of biological role, component of the F(0) channel, it forms part of the peripheral stalk, linking F(1) to F(0). The chain is ATP synthase subunit b from Neisseria gonorrhoeae (strain NCCP11945).